Reading from the N-terminus, the 289-residue chain is Pantothenate synthetase (289 aa).

Met-28–His-35 contacts ATP. Residue His-35 is the Proton donor of the active site. Residue Gln-59 coordinates (R)-pantoate. Gln-59 serves as a coordination point for beta-alanine. An ATP-binding site is contributed by Gly-147–Asp-150. Gln-153 is a binding site for (R)-pantoate. Residues Val-176 and Met-184–Arg-187 contribute to the ATP site.

Belongs to the pantothenate synthetase family. Homodimer.

It localises to the cytoplasm. The enzyme catalyses (R)-pantoate + beta-alanine + ATP = (R)-pantothenate + AMP + diphosphate + H(+). Its pathway is cofactor biosynthesis; (R)-pantothenate biosynthesis; (R)-pantothenate from (R)-pantoate and beta-alanine: step 1/1. In terms of biological role, catalyzes the condensation of pantoate with beta-alanine in an ATP-dependent reaction via a pantoyl-adenylate intermediate. This is Pantothenate synthetase from Magnetococcus marinus (strain ATCC BAA-1437 / JCM 17883 / MC-1).